We begin with the raw amino-acid sequence, 209 residues long: PF03932 family protein CutC (209 aa).

The protein localises to the cytoplasm. In Streptococcus pyogenes serotype M6 (strain ATCC BAA-946 / MGAS10394), this protein is PF03932 family protein CutC.